The sequence spans 801 residues: Na(+)/H(+) antiporter subunit A1 (801 aa).

A run of 19 helical transmembrane segments spans residues 1–21 (MSLLHIAVILPLIFVLIIPIL), 28–48 (IHLGWFVLPVPIVIFIYMLTL), 79–99 (LGLLFSLLISGIGSLVVLYSI), 117–137 (LFMGAMLGVVLSDNVIILYLF), 166–186 (LIITVFGGLSLLGGIILLAIP), 206–226 (PFFIFAMILIMIGAFTKSAQF), 265–285 (IFAASQGWIWTVTLVGLITLF), 300–320 (ILAFSTVSQLGMIMAMLGIGA), 337–357 (FTAAIFHLINHATFKGALFMI), 373–393 (LGGLLTIMPISFTITVITALS), 427–447 (LGYLFPIIGIVGSVFTFVYSI), 472–492 (ILMLLSPAILATLVIVFGLFP), 522–542 (GLTPAFLSTLVIYILGILLIV), 591–611 (LVIIFGALILLTFVTVFSVPF), 623–643 (IFEVCIVILLLSAAFLILFAK), 646–666 (LFNIIMLSAVGYAVSVLFIFF), 671–691 (LALTQFVVESISTALFLLCFY), 707–727 (LTNALIAGGVGLSVIIIGLIA), and 764–784 (MDTLFESSVLGIAGLAVYTMI).

This sequence belongs to the CPA3 antiporters (TC 2.A.63) subunit A family. In terms of assembly, may form a heterooligomeric complex that consists of seven subunits: mnhA1, mnhB1, mnhC1, mnhD1, mnhE1, mnhF1 and mnhG1.

It is found in the cell membrane. Its function is as follows. Mnh complex is a Na(+)/H(+) antiporter involved in Na(+) excretion. This Staphylococcus aureus (strain bovine RF122 / ET3-1) protein is Na(+)/H(+) antiporter subunit A1 (mnhA1).